The chain runs to 181 residues: Alkyl hydroperoxide reductase AhpD (181 aa).

Catalysis depends on Cys-131, which acts as the Proton donor. Cys-131 and Cys-134 are joined by a disulfide. Cys-134 serves as the catalytic Cysteine sulfenic acid (-SOH) intermediate.

This sequence belongs to the AhpD family.

It catalyses the reaction N(6)-[(R)-dihydrolipoyl]-L-lysyl-[lipoyl-carrier protein] + a hydroperoxide = N(6)-[(R)-lipoyl]-L-lysyl-[lipoyl-carrier protein] + an alcohol + H2O. Its function is as follows. Antioxidant protein with alkyl hydroperoxidase activity. Required for the reduction of the AhpC active site cysteine residues and for the regeneration of the AhpC enzyme activity. The sequence is that of Alkyl hydroperoxide reductase AhpD from Rhodopseudomonas palustris (strain BisA53).